A 78-amino-acid chain; its full sequence is Conotoxin Cl14.9 (78 aa).

A signal peptide spans 1–22 (MTAKATLLVLALVVMATSGVSS). Residues 23-47 (ASVAGGPVVNSDTVSRSDPERLSTR) constitute a propeptide that is removed on maturation. I70 carries the post-translational modification Isoleucine amide. Positions 74–78 (DITQQ) are excised as a propeptide.

Post-translationally, contains 2 disulfide bonds. As to expression, expressed by the venom duct.

It is found in the secreted. The sequence is that of Conotoxin Cl14.9 from Californiconus californicus (California cone).